The following is a 638-amino-acid chain: MAAKSDGGGVGVGFAQLHNLDEAVGSGEEDGEPGGGGCGGGDGSEPGESSSLHICHCCNTSSCYWGCRSACLRSLLGKKPRRSAAAADGGDQPLQPPGAAGRHPPTPSAGRPQPASPQVERPWLDCLWIVLALLVFFGDVGTDLWLALDYYRKGDYGCFGLTLFFVLVPSLLVQSLSFRWFVQDYTGGGLGAVEGLSSRGPPMMGAGYGHGAARGGPGAGGSATPGAQRLCRLSVWIWQSVIHLLQMGQVWRYIRTMYLGIQSQRQKEHQRRFYWAMMYEYADVNMLRLLETFLESAPQLVLQLCIMIQKNSAETLPCVSSVTSLMSLAWVLASYHKLLRDSRDDKKSMSYRGALIHLFWRLFTISSRVISFALFASIFQLYFGIFVVVHWCAMAFWIIHGGTDFCMSKWEEILFNMVVGIVYIFCWFNVKEGRTRYRMFAYYTIVLTENAALTFLWYFYRNPESTDSYAVPALCCVFVSFVAGITLMLLYYGVLHPMGPRAKVFASSCCAELLWGIPLPPDVEPMAPQTPGYRGTQVTPTRAVTEQQEDLTADTCLPVFQVRPMGPSTPSGRPYHPEGPLIKIDMPRKRYPAWDAHFVDRRLRRTINILQYVTPTAVGIRYRDGPLLYELLQYESSL.

2 disordered regions span residues 24–43 and 82–117; these read VGSG…GGDG and RSAA…PASP. The span at 33–43 shows a compositional bias: gly residues; that stretch reads PGGGGCGGGDG. A run of 7 helical transmembrane segments spans residues 127–147, 158–178, 315–335, 369–389, 410–430, 439–459, and 470–490; these read LWIV…LWLA, CFGL…SLSF, TLPC…LASY, VISF…FVVV, WEEI…WFNV, MFAY…LWYF, and AVPA…LMLL.

The protein belongs to the XK family.

The protein localises to the cell membrane. The polypeptide is XK-related protein 6 (Mus musculus (Mouse)).